Reading from the N-terminus, the 1116-residue chain is Protein STICHEL-like 1 (1116 aa).

Disordered stretches follow at residues 95 to 138 and 225 to 244; these read RTSS…LEET and KFLRGTSKREDSSHTCNSTP. A compositionally biased stretch (acidic residues) spans 115–124; sequence NDDDDDDDDV. 2 short sequence motifs (PEST) span residues 257 to 282 and 402 to 422; these read RNPSTVGSWEDGDDELDDDNLDFKGR and KSQDGEREEEEEGGSTPESIQ. Position 463–470 (463–470) interacts with ATP; sequence GPRGTGKT. Positions 482, 492, 495, and 498 each coordinate Zn(2+). Positions 726 to 760 form a coiled coil; sequence EAFLDRRNLTEADLERLKHALKLLSEAEKQLRVST. Residues 777 to 798 form a disordered region; the sequence is PSPGTTHTGSSRRQSSRATEES. A compositionally biased stretch (polar residues) spans 778–793; that stretch reads SPGTTHTGSSRRQSSR.

It belongs to the DnaX/STICHEL family.

This is Protein STICHEL-like 1 from Arabidopsis thaliana (Mouse-ear cress).